Reading from the N-terminus, the 488-residue chain is Glutamyl-tRNA(Gln) amidotransferase subunit A (488 aa).

Catalysis depends on charge relay system residues Lys78 and Ser153. Ser177 serves as the catalytic Acyl-ester intermediate.

The protein belongs to the amidase family. GatA subfamily. In terms of assembly, heterotrimer of A, B and C subunits.

The enzyme catalyses L-glutamyl-tRNA(Gln) + L-glutamine + ATP + H2O = L-glutaminyl-tRNA(Gln) + L-glutamate + ADP + phosphate + H(+). Its function is as follows. Allows the formation of correctly charged Gln-tRNA(Gln) through the transamidation of misacylated Glu-tRNA(Gln) in organisms which lack glutaminyl-tRNA synthetase. The reaction takes place in the presence of glutamine and ATP through an activated gamma-phospho-Glu-tRNA(Gln). This Solidesulfovibrio magneticus (strain ATCC 700980 / DSM 13731 / RS-1) (Desulfovibrio magneticus) protein is Glutamyl-tRNA(Gln) amidotransferase subunit A.